We begin with the raw amino-acid sequence, 60 residues long: uncharacterized protein (60 aa).

Residues Ser38–Tyr58 traverse the membrane as a helical segment.

The protein resides in the membrane. This is an uncharacterized protein from Saccharomyces cerevisiae (strain ATCC 204508 / S288c) (Baker's yeast).